The chain runs to 196 residues: UPF0200 protein MK0400 (196 aa).

7–14 (GMPGAGKG) serves as a coordination point for ATP.

This sequence belongs to the UPF0200 family.

The protein is UPF0200 protein MK0400 of Methanopyrus kandleri (strain AV19 / DSM 6324 / JCM 9639 / NBRC 100938).